The primary structure comprises 363 residues: UDP-N-acetylglucosamine--N-acetylmuramyl-(pentapeptide) pyrophosphoryl-undecaprenol N-acetylglucosamine transferase (363 aa).

UDP-N-acetyl-alpha-D-glucosamine is bound by residues 12–14 (TAG), arginine 166, serine 196, and glutamine 291.

This sequence belongs to the glycosyltransferase 28 family. MurG subfamily.

Its subcellular location is the cell inner membrane. The enzyme catalyses di-trans,octa-cis-undecaprenyl diphospho-N-acetyl-alpha-D-muramoyl-L-alanyl-D-glutamyl-meso-2,6-diaminopimeloyl-D-alanyl-D-alanine + UDP-N-acetyl-alpha-D-glucosamine = di-trans,octa-cis-undecaprenyl diphospho-[N-acetyl-alpha-D-glucosaminyl-(1-&gt;4)]-N-acetyl-alpha-D-muramoyl-L-alanyl-D-glutamyl-meso-2,6-diaminopimeloyl-D-alanyl-D-alanine + UDP + H(+). It participates in cell wall biogenesis; peptidoglycan biosynthesis. Cell wall formation. Catalyzes the transfer of a GlcNAc subunit on undecaprenyl-pyrophosphoryl-MurNAc-pentapeptide (lipid intermediate I) to form undecaprenyl-pyrophosphoryl-MurNAc-(pentapeptide)GlcNAc (lipid intermediate II). This chain is UDP-N-acetylglucosamine--N-acetylmuramyl-(pentapeptide) pyrophosphoryl-undecaprenol N-acetylglucosamine transferase, found in Legionella pneumophila (strain Paris).